A 530-amino-acid polypeptide reads, in one-letter code: Bifunctional purine biosynthesis protein PurH (530 aa).

Positions 1-148 (MNNARPIRRA…KNHKDVTIVV (148 aa)) constitute an MGS-like domain.

Belongs to the PurH family.

It catalyses the reaction (6R)-10-formyltetrahydrofolate + 5-amino-1-(5-phospho-beta-D-ribosyl)imidazole-4-carboxamide = 5-formamido-1-(5-phospho-D-ribosyl)imidazole-4-carboxamide + (6S)-5,6,7,8-tetrahydrofolate. The catalysed reaction is IMP + H2O = 5-formamido-1-(5-phospho-D-ribosyl)imidazole-4-carboxamide. The protein operates within purine metabolism; IMP biosynthesis via de novo pathway; 5-formamido-1-(5-phospho-D-ribosyl)imidazole-4-carboxamide from 5-amino-1-(5-phospho-D-ribosyl)imidazole-4-carboxamide (10-formyl THF route): step 1/1. It functions in the pathway purine metabolism; IMP biosynthesis via de novo pathway; IMP from 5-formamido-1-(5-phospho-D-ribosyl)imidazole-4-carboxamide: step 1/1. This chain is Bifunctional purine biosynthesis protein PurH, found in Vibrio parahaemolyticus serotype O3:K6 (strain RIMD 2210633).